The sequence spans 171 residues: Terminase, small subunit (171 aa).

This sequence belongs to the P23virus small terminase family. Homononamer; forms a ring-like structure through which genomic DNA is translocated into the capsid. Heterodimer with the terminase large subunit; the active complex is probably heterooligomeric.

Functionally, the terminase small subunit binds to the packaging initiation site and regulates the ATPase activity of the terminase large subunit. The terminase lies at a unique vertex of the procapsid and is composed of two subunits, a small terminase subunit involved in viral DNA recognition (packaging sequence), and a large terminase subunit. Both terminase subunits heterooligomerize and are docked on the portal protein to form the packaging machine. The chain is Terminase, small subunit from Thermus virus P23-45 (Thermus thermophilus phage P23-45).